We begin with the raw amino-acid sequence, 181 residues long: ATP-dependent protease subunit HslV (181 aa).

Thr-7 is a catalytic residue. Na(+) contacts are provided by Gly-164, Cys-167, and Thr-170.

Belongs to the peptidase T1B family. HslV subfamily. As to quaternary structure, a double ring-shaped homohexamer of HslV is capped on each side by a ring-shaped HslU homohexamer. The assembly of the HslU/HslV complex is dependent on binding of ATP.

The protein localises to the cytoplasm. The enzyme catalyses ATP-dependent cleavage of peptide bonds with broad specificity.. Its activity is regulated as follows. Allosterically activated by HslU binding. Protease subunit of a proteasome-like degradation complex believed to be a general protein degrading machinery. The chain is ATP-dependent protease subunit HslV from Shouchella clausii (strain KSM-K16) (Alkalihalobacillus clausii).